Consider the following 892-residue polypeptide: Alanine--tRNA ligase (892 aa).

The Zn(2+) site is built by histidine 594, histidine 598, cysteine 702, and histidine 706.

The protein belongs to the class-II aminoacyl-tRNA synthetase family. Zn(2+) is required as a cofactor.

The protein localises to the cytoplasm. The catalysed reaction is tRNA(Ala) + L-alanine + ATP = L-alanyl-tRNA(Ala) + AMP + diphosphate. Catalyzes the attachment of alanine to tRNA(Ala) in a two-step reaction: alanine is first activated by ATP to form Ala-AMP and then transferred to the acceptor end of tRNA(Ala). Also edits incorrectly charged Ser-tRNA(Ala) and Gly-tRNA(Ala) via its editing domain. In Pyrobaculum arsenaticum (strain DSM 13514 / JCM 11321 / PZ6), this protein is Alanine--tRNA ligase.